Reading from the N-terminus, the 215-residue chain is Adenylate kinase (215 aa).

Residue 14–19 coordinates ATP; sequence GVGKGT. Positions 34 to 63 are NMP; sequence STGDIFRSVMQEQGALSQTLAHYMNQGLYV. AMP contacts are provided by residues Thr35, Arg40, 61-63, 91-94, and Gln98; these read LYV and GYPR. An LID region spans residues 128–165; sequence NRLVCPSCGSVYNKQSKPPLKANQCDRCHATLQARNDD. Arg129 is a binding site for ATP. The Zn(2+) site is built by Cys132 and Cys135. 138-139 serves as a coordination point for ATP; that stretch reads VY. The Zn(2+) site is built by Cys152 and Cys155. 2 residues coordinate AMP: Arg162 and Arg173. Gln211 contacts ATP.

Belongs to the adenylate kinase family. In terms of assembly, monomer.

Its subcellular location is the cytoplasm. The enzyme catalyses AMP + ATP = 2 ADP. The protein operates within purine metabolism; AMP biosynthesis via salvage pathway; AMP from ADP: step 1/1. Its function is as follows. Catalyzes the reversible transfer of the terminal phosphate group between ATP and AMP. Plays an important role in cellular energy homeostasis and in adenine nucleotide metabolism. The polypeptide is Adenylate kinase (Mycoplasma pneumoniae (strain ATCC 29342 / M129 / Subtype 1) (Mycoplasmoides pneumoniae)).